Here is a 301-residue protein sequence, read N- to C-terminus: Sulfate adenylyltransferase subunit 2 (301 aa).

Positions 279-301 (RQGRLIDRDEAGSMEKKKREGYF) are disordered.

The protein belongs to the PAPS reductase family. CysD subfamily. As to quaternary structure, sulfate-activating enzymes, NodP and NodQ, may be physically associated.

The enzyme catalyses sulfate + ATP + H(+) = adenosine 5'-phosphosulfate + diphosphate. Its function is as follows. Proposed to provide activated sulfate for transfer to nod factor. The sequence is that of Sulfate adenylyltransferase subunit 2 (nodP) from Rhizobium sp. (strain N33).